We begin with the raw amino-acid sequence, 123 residues long: Small ribosomal subunit protein uS13 (123 aa).

The tract at residues 93-123 (RRNLPVRGQKTKTNARTRKGPKRAIGGKKKK) is disordered.

This sequence belongs to the universal ribosomal protein uS13 family. Part of the 30S ribosomal subunit. Forms a loose heterodimer with protein S19. Forms two bridges to the 50S subunit in the 70S ribosome.

Functionally, located at the top of the head of the 30S subunit, it contacts several helices of the 16S rRNA. In the 70S ribosome it contacts the 23S rRNA (bridge B1a) and protein L5 of the 50S subunit (bridge B1b), connecting the 2 subunits; these bridges are implicated in subunit movement. Contacts the tRNAs in the A and P-sites. The protein is Small ribosomal subunit protein uS13 of Clostridium botulinum (strain Kyoto / Type A2).